The sequence spans 399 residues: Elongation factor Tu (399 aa).

One can recognise a tr-type G domain in the interval 10 to 209 (KPHVNIGTIG…AVDDYIPTPA (200 aa)). Residues 19 to 26 (GHVDHGKT) are G1. Residue 19-26 (GHVDHGKT) coordinates GTP. Thr-26 is a binding site for Mg(2+). The tract at residues 60 to 64 (GITIA) is G2. The G3 stretch occupies residues 81 to 84 (DCPG). Residues 81-85 (DCPGH) and 136-139 (NKAD) each bind GTP. Positions 136–139 (NKAD) are G4. The G5 stretch occupies residues 174-176 (SAL).

It belongs to the TRAFAC class translation factor GTPase superfamily. Classic translation factor GTPase family. EF-Tu/EF-1A subfamily. Monomer.

It is found in the cytoplasm. It carries out the reaction GTP + H2O = GDP + phosphate + H(+). Its function is as follows. GTP hydrolase that promotes the GTP-dependent binding of aminoacyl-tRNA to the A-site of ribosomes during protein biosynthesis. This is Elongation factor Tu from Campylobacter lari (strain RM2100 / D67 / ATCC BAA-1060).